The following is a 215-amino-acid chain: Cytochrome b6 (215 aa).

The chain crosses the membrane as a helical span at residues 32–52 (IFYCLGGITLTCFLVQVATGF). Residue C35 participates in heme c binding. Residues H86 and H100 each coordinate heme b. A run of 3 helical transmembrane segments spans residues 90–110 (ASMM…TGGF), 116–136 (LTWV…VTGY), and 186–206 (LHTF…FPMI). Positions 187 and 202 each coordinate heme b.

Belongs to the cytochrome b family. PetB subfamily. The 4 large subunits of the cytochrome b6-f complex are cytochrome b6, subunit IV (17 kDa polypeptide, PetD), cytochrome f and the Rieske protein, while the 4 small subunits are PetG, PetL, PetM and PetN. The complex functions as a dimer. It depends on heme b as a cofactor. Heme c is required as a cofactor.

The protein localises to the plastid. It localises to the chloroplast thylakoid membrane. Its function is as follows. Component of the cytochrome b6-f complex, which mediates electron transfer between photosystem II (PSII) and photosystem I (PSI), cyclic electron flow around PSI, and state transitions. This chain is Cytochrome b6, found in Saccharum hybrid (Sugarcane).